Consider the following 127-residue polypeptide: Fumarate reductase subunit C (127 aa).

The next 3 membrane-spanning stretches (helical) occupy residues 30 to 50, 67 to 87, and 107 to 127; these read ATVL…GSLV, IVVA…QTFF, and VVVL…LVIV.

The protein belongs to the FrdC family. As to quaternary structure, part of an enzyme complex containing four subunits: a flavoprotein (FrdA), an iron-sulfur protein (FrdB), and two hydrophobic anchor proteins (FrdC and FrdD).

The protein localises to the cell inner membrane. Its function is as follows. Anchors the catalytic components of the fumarate reductase complex to the cell membrane, binds quinones. This chain is Fumarate reductase subunit C, found in Aliivibrio fischeri (strain ATCC 700601 / ES114) (Vibrio fischeri).